The following is a 367-amino-acid chain: Peptide chain release factor 1 (367 aa).

Gln-243 carries the N5-methylglutamine modification.

Belongs to the prokaryotic/mitochondrial release factor family. In terms of processing, methylated by PrmC. Methylation increases the termination efficiency of RF1.

It localises to the cytoplasm. Peptide chain release factor 1 directs the termination of translation in response to the peptide chain termination codons UAG and UAA. In Acidovorax sp. (strain JS42), this protein is Peptide chain release factor 1.